Consider the following 324-residue polypeptide: Autolytic lysozyme (324 aa).

Catalysis depends on residues Asp5 and Glu91. Tandem repeats lie at residues 212 to 234 (LLKR…IKDF), 235 to 254 (QSIM…SGAA), 255 to 277 (QQIF…TRYI), 278 to 300 (QYRV…VAAW), and 301 to 324 (QSNQ…LDEN). Positions 212–324 (LLKRGLEVDG…ATWSKLLDEN (113 aa)) are 5 X 23 AA tandem repeats.

It belongs to the glycosyl hydrolase 25 family. As to quaternary structure, monomer.

It is found in the secreted. Its subcellular location is the cytoplasm. It catalyses the reaction Hydrolysis of (1-&gt;4)-beta-linkages between N-acetylmuramic acid and N-acetyl-D-glucosamine residues in a peptidoglycan and between N-acetyl-D-glucosamine residues in chitodextrins.. The protein is Autolytic lysozyme (lyc) of Clostridium acetobutylicum (strain ATCC 824 / DSM 792 / JCM 1419 / IAM 19013 / LMG 5710 / NBRC 13948 / NRRL B-527 / VKM B-1787 / 2291 / W).